The primary structure comprises 1124 residues: Phytochrome A (1124 aa).

Over residues 1–19 the composition is skewed to low complexity; that stretch reads MSTTRPSQSSNNSGRSRNS. The interval 1–21 is disordered; sequence MSTTRPSQSSNNSGRSRNSAR. The GAF domain occupies 218 to 401; sequence SMERLCDTMV…VFAIHVNKEI (184 aa). Cysteine 323 is a binding site for phytochromobilin. PAS domains lie at 617–687 and 750–821; these read VTSE…LQGE and DYKA…VNFG. Residues 901 to 1120 form the Histidine kinase domain; sequence YMKRQIRNPL…ILSVELAAAH (220 aa).

It belongs to the phytochrome family. Homodimer. In terms of processing, contains one covalently linked phytochromobilin chromophore.

Functionally, regulatory photoreceptor which exists in two forms that are reversibly interconvertible by light: the Pr form that absorbs maximally in the red region of the spectrum and the Pfr form that absorbs maximally in the far-red region. Photoconversion of Pr to Pfr induces an array of morphogenic responses, whereas reconversion of Pfr to Pr cancels the induction of those responses. Pfr controls the expression of a number of nuclear genes including those encoding the small subunit of ribulose-bisphosphate carboxylase, chlorophyll A/B binding protein, protochlorophyllide reductase, rRNA, etc. It also controls the expression of its own gene(s) in a negative feedback fashion. The sequence is that of Phytochrome A (PHYA) from Pisum sativum (Garden pea).